A 290-amino-acid polypeptide reads, in one-letter code: Small ribosomal subunit protein bS6 (290 aa).

Residues valine 208–glycine 233 form a disordered region.

Belongs to the bacterial ribosomal protein bS6 family.

Binds together with bS18 to 16S ribosomal RNA. In Mesoplasma florum (strain ATCC 33453 / NBRC 100688 / NCTC 11704 / L1) (Acholeplasma florum), this protein is Small ribosomal subunit protein bS6.